Reading from the N-terminus, the 320-residue chain is Ribonuclease Z (320 aa).

Residues His62, His64, Asp66, His67, His139, Asp210, and His268 each coordinate Zn(2+). Asp66 functions as the Proton acceptor in the catalytic mechanism.

Belongs to the RNase Z family. As to quaternary structure, homodimer. The cofactor is Zn(2+).

The enzyme catalyses Endonucleolytic cleavage of RNA, removing extra 3' nucleotides from tRNA precursor, generating 3' termini of tRNAs. A 3'-hydroxy group is left at the tRNA terminus and a 5'-phosphoryl group is left at the trailer molecule.. Zinc phosphodiesterase, which displays some tRNA 3'-processing endonuclease activity. Probably involved in tRNA maturation, by removing a 3'-trailer from precursor tRNA. This Cyanothece sp. (strain PCC 7425 / ATCC 29141) protein is Ribonuclease Z.